Reading from the N-terminus, the 318-residue chain is 2-dehydro-3-deoxygalactonokinase (318 aa).

Residues 35–39 (GAESN), Y90, 105–107 (YDR), and R169 each bind substrate. Residues 167 to 169 (NYR), 228 to 233 (TRGEDG), and 257 to 260 (GTGD) contribute to the ATP site. Substrate contacts are provided by D260 and D296. D260 serves as the catalytic Proton acceptor.

This sequence belongs to the carbohydrate kinase PfkB family. In terms of assembly, homohexamer.

It catalyses the reaction 2-dehydro-3-deoxy-D-galactonate + ATP = 2-dehydro-3-deoxy-6-phospho-D-galactonate + ADP + H(+). Functionally, involved in galactose catabolism. Catalyzes the phosphorylation of 2-keto-3-deoxygalactonate (KDGal) to produce 2-keto-3-deoxy-6-phosphogalactonate (KDPGal). Can also phosphorylate 2-keto-3-deoxygluconate (KDG) to 2-keto-3-deoxy-6-phosphogluconate (KDPG), but the catalytic efficiency for KDGal is 50-fold higher than for KDG. This is 2-dehydro-3-deoxygalactonokinase from Haloferax volcanii (strain ATCC 29605 / DSM 3757 / JCM 8879 / NBRC 14742 / NCIMB 2012 / VKM B-1768 / DS2) (Halobacterium volcanii).